Reading from the N-terminus, the 536-residue chain is Chaperonin GroEL 1 (536 aa).

Residues 29–32 (TLGP), 86–90 (DGTTT), Gly-413, 476–478 (NAA), and Asp-492 each bind ATP.

The protein belongs to the chaperonin (HSP60) family. Forms a cylinder of 14 subunits composed of two heptameric rings stacked back-to-back. Interacts with the co-chaperonin GroES.

It is found in the cytoplasm. The catalysed reaction is ATP + H2O + a folded polypeptide = ADP + phosphate + an unfolded polypeptide.. Its function is as follows. Together with its co-chaperonin GroES, plays an essential role in assisting protein folding. The GroEL-GroES system forms a nano-cage that allows encapsulation of the non-native substrate proteins and provides a physical environment optimized to promote and accelerate protein folding. The sequence is that of Chaperonin GroEL 1 from Nocardia farcinica (strain IFM 10152).